We begin with the raw amino-acid sequence, 167 residues long: Putative peroxiredoxin-B (167 aa).

Residues 4–167 enclose the Thioredoxin domain; sequence IKRGDRFPTT…STAQKIIAKL (164 aa). Residue Cys53 is the Cysteine sulfenic acid (-SOH) intermediate of the active site. The short motif at 165-167 is the Microbody targeting signal element; sequence AKL.

It belongs to the peroxiredoxin family. Prx5 subfamily.

It is found in the peroxisome membrane. The catalysed reaction is a hydroperoxide + [thioredoxin]-dithiol = an alcohol + [thioredoxin]-disulfide + H2O. In terms of biological role, thiol-specific peroxidase that catalyzes the reduction of hydrogen peroxide and organic hydroperoxides to water and alcohols, respectively. Plays a role in cell protection against oxidative stress by detoxifying peroxides and as sensor of hydrogen peroxide-mediated signaling events. This Candida boidinii (Yeast) protein is Putative peroxiredoxin-B (PMPB).